The primary structure comprises 431 residues: Probable 3-hydroxy-3-methylglutaryl-coenzyme A reductase (431 aa).

Catalysis depends on charge relay system residues Glu-85 and Asp-278. Residue His-375 is the Proton donor of the active site.

This sequence belongs to the HMG-CoA reductase family.

It carries out the reaction (R)-mevalonate + 2 NAD(+) + CoA = (3S)-3-hydroxy-3-methylglutaryl-CoA + 2 NADH + 2 H(+). It functions in the pathway metabolic intermediate metabolism; (R)-mevalonate degradation; (S)-3-hydroxy-3-methylglutaryl-CoA from (R)-mevalonate: step 1/1. Converts HMG-CoA to mevalonate. This chain is Probable 3-hydroxy-3-methylglutaryl-coenzyme A reductase, found in Borreliella burgdorferi (strain ATCC 35210 / DSM 4680 / CIP 102532 / B31) (Borrelia burgdorferi).